The primary structure comprises 1080 residues: Carbamoyl phosphate synthase large chain (1080 aa).

The segment at M1 to E403 is carboxyphosphate synthetic domain. R129, R169, G175, G176, E208, V210, E215, G241, V242, H243, Q285, and E299 together coordinate ATP. Residues R133–V328 form the ATP-grasp 1 domain. Mg(2+) is bound by residues Q285, E299, and N301. Mn(2+) is bound by residues Q285, E299, and N301. The interval T404–A554 is oligomerization domain. Residues L555–G942 form a carbamoyl phosphate synthetic domain region. The region spanning Q679–A876 is the ATP-grasp 2 domain. ATP contacts are provided by R715, R754, L756, E761, G787, V788, H789, S790, Q830, and E847. Mg(2+) is bound by residues Q830, E847, and N849. The Mn(2+) site is built by Q830, E847, and N849. The region spanning I943–A1080 is the MGS-like domain. Residues I943–A1080 are allosteric domain.

This sequence belongs to the CarB family. In terms of assembly, composed of two chains; the small (or glutamine) chain promotes the hydrolysis of glutamine to ammonia, which is used by the large (or ammonia) chain to synthesize carbamoyl phosphate. Tetramer of heterodimers (alpha,beta)4. Requires Mg(2+) as cofactor. Mn(2+) is required as a cofactor.

The catalysed reaction is hydrogencarbonate + L-glutamine + 2 ATP + H2O = carbamoyl phosphate + L-glutamate + 2 ADP + phosphate + 2 H(+). The enzyme catalyses hydrogencarbonate + NH4(+) + 2 ATP = carbamoyl phosphate + 2 ADP + phosphate + 2 H(+). It participates in amino-acid biosynthesis; L-arginine biosynthesis; carbamoyl phosphate from bicarbonate: step 1/1. It functions in the pathway pyrimidine metabolism; UMP biosynthesis via de novo pathway; (S)-dihydroorotate from bicarbonate: step 1/3. Its function is as follows. Large subunit of the glutamine-dependent carbamoyl phosphate synthetase (CPSase). CPSase catalyzes the formation of carbamoyl phosphate from the ammonia moiety of glutamine, carbonate, and phosphate donated by ATP, constituting the first step of 2 biosynthetic pathways, one leading to arginine and/or urea and the other to pyrimidine nucleotides. The large subunit (synthetase) binds the substrates ammonia (free or transferred from glutamine from the small subunit), hydrogencarbonate and ATP and carries out an ATP-coupled ligase reaction, activating hydrogencarbonate by forming carboxy phosphate which reacts with ammonia to form carbamoyl phosphate. This chain is Carbamoyl phosphate synthase large chain, found in Xanthomonas axonopodis pv. citri (strain 306).